Here is a 210-residue protein sequence, read N- to C-terminus: Probable GTP-binding protein EngB (210 aa).

The EngB-type G domain maps to 30–204 (QGYEVAFAGR…YRVLADWMEL (175 aa)). GTP contacts are provided by residues 38-45 (GRSNAGKS), 64-68 (GRTQL), 82-85 (DLPG), 149-152 (TKAD), and 182-185 (LFSA). The Mg(2+) site is built by S45 and T66.

The protein belongs to the TRAFAC class TrmE-Era-EngA-EngB-Septin-like GTPase superfamily. EngB GTPase family. Requires Mg(2+) as cofactor.

In terms of biological role, necessary for normal cell division and for the maintenance of normal septation. The chain is Probable GTP-binding protein EngB from Pseudomonas entomophila (strain L48).